Here is a 70-residue protein sequence, read N- to C-terminus: ATP synthase subunit c (70 aa).

The next 2 membrane-spanning stretches (helical) occupy residues 4–24 (IAAG…DGIV) and 47–67 (FIGV…SLLV).

This sequence belongs to the ATPase C chain family. F-type ATPases have 2 components, F(1) - the catalytic core - and F(0) - the membrane proton channel. F(1) has five subunits: alpha(3), beta(3), gamma(1), delta(1), epsilon(1). F(0) has three main subunits: a(1), b(2) and c(10-14). The alpha and beta chains form an alternating ring which encloses part of the gamma chain. F(1) is attached to F(0) by a central stalk formed by the gamma and epsilon chains, while a peripheral stalk is formed by the delta and b chains.

The protein localises to the cell membrane. In terms of biological role, f(1)F(0) ATP synthase produces ATP from ADP in the presence of a proton or sodium gradient. F-type ATPases consist of two structural domains, F(1) containing the extramembraneous catalytic core and F(0) containing the membrane proton channel, linked together by a central stalk and a peripheral stalk. During catalysis, ATP synthesis in the catalytic domain of F(1) is coupled via a rotary mechanism of the central stalk subunits to proton translocation. Functionally, key component of the F(0) channel; it plays a direct role in translocation across the membrane. A homomeric c-ring of between 10-14 subunits forms the central stalk rotor element with the F(1) delta and epsilon subunits. This is ATP synthase subunit c from Pediococcus pentosaceus (strain ATCC 25745 / CCUG 21536 / LMG 10740 / 183-1w).